The following is a 174-amino-acid chain: ATP synthase subunit b, organellar chromatophore (174 aa).

A helical transmembrane segment spans residues 26–46; it reads LINLIIVIGVLFTFLRGFLGE.

This sequence belongs to the ATPase B chain family. As to quaternary structure, F-type ATPases have 2 components, F(1) - the catalytic core - and F(0) - the membrane proton channel. F(1) has five subunits: alpha(3), beta(3), gamma(1), delta(1), epsilon(1). F(0) has four main subunits: a(1), b(1), b'(1) and c(10-14). The alpha and beta chains form an alternating ring which encloses part of the gamma chain. F(1) is attached to F(0) by a central stalk formed by the gamma and epsilon chains, while a peripheral stalk is formed by the delta, b and b' chains.

It localises to the plastid. The protein localises to the organellar chromatophore thylakoid membrane. Its function is as follows. F(1)F(0) ATP synthase produces ATP from ADP in the presence of a proton or sodium gradient. F-type ATPases consist of two structural domains, F(1) containing the extramembraneous catalytic core and F(0) containing the membrane proton channel, linked together by a central stalk and a peripheral stalk. During catalysis, ATP synthesis in the catalytic domain of F(1) is coupled via a rotary mechanism of the central stalk subunits to proton translocation. In terms of biological role, component of the F(0) channel, it forms part of the peripheral stalk, linking F(1) to F(0). The polypeptide is ATP synthase subunit b, organellar chromatophore (Paulinella chromatophora).